The sequence spans 148 residues: NADPH-dependent 7-cyano-7-deazaguanine reductase (148 aa).

The active-site Thioimide intermediate is the cysteine 50. The active-site Proton donor is the aspartate 57. Residues 72 to 74 (VES) and 91 to 92 (HE) each bind substrate.

The protein belongs to the GTP cyclohydrolase I family. QueF type 1 subfamily.

It is found in the cytoplasm. The enzyme catalyses 7-aminomethyl-7-carbaguanine + 2 NADP(+) = 7-cyano-7-deazaguanine + 2 NADPH + 3 H(+). It participates in tRNA modification; tRNA-queuosine biosynthesis. Functionally, catalyzes the NADPH-dependent reduction of 7-cyano-7-deazaguanine (preQ0) to 7-aminomethyl-7-deazaguanine (preQ1). This chain is NADPH-dependent 7-cyano-7-deazaguanine reductase, found in Helicobacter acinonychis (strain Sheeba).